The primary structure comprises 347 residues: UPF0284 protein SSO2213 (347 aa).

Belongs to the UPF0284 family.

This Saccharolobus solfataricus (strain ATCC 35092 / DSM 1617 / JCM 11322 / P2) (Sulfolobus solfataricus) protein is UPF0284 protein SSO2213.